Reading from the N-terminus, the 186-residue chain is ATP synthase subunit delta (186 aa).

It belongs to the ATPase delta chain family. In terms of assembly, F-type ATPases have 2 components, F(1) - the catalytic core - and F(0) - the membrane proton channel. F(1) has five subunits: alpha(3), beta(3), gamma(1), delta(1), epsilon(1). CF(0) has four main subunits: a(1), b(1), b'(1) and c(10-14). The alpha and beta chains form an alternating ring which encloses part of the gamma chain. F(1) is attached to F(0) by a central stalk formed by the gamma and epsilon chains, while a peripheral stalk is formed by the delta, b and b' chains.

It is found in the cell inner membrane. In terms of biological role, f(1)F(0) ATP synthase produces ATP from ADP in the presence of a proton or sodium gradient. F-type ATPases consist of two structural domains, F(1) containing the extramembraneous catalytic core and F(0) containing the membrane proton channel, linked together by a central stalk and a peripheral stalk. During catalysis, ATP synthesis in the catalytic domain of F(1) is coupled via a rotary mechanism of the central stalk subunits to proton translocation. Its function is as follows. This protein is part of the stalk that links CF(0) to CF(1). It either transmits conformational changes from CF(0) to CF(1) or is implicated in proton conduction. This Dinoroseobacter shibae (strain DSM 16493 / NCIMB 14021 / DFL 12) protein is ATP synthase subunit delta.